The following is a 361-amino-acid chain: MNYIYSFINGDFMRFFNREKEITEILSILEGNPDLVYFVYGPLNSGKTALISEIINNRIDKNKYVVFYINLRGIFISKYKDFIEVLFEEYEEDRKPVEIIKSLIKDVPSLCGIPTPKNTLEEILKKKTTKNVFKYITNVLMDIKKEGKQPIIIIDELQKIGDMKINGFLIYELFNYFVDLTKELHLCHVFCLSSDSLFIEQVYSEAMLKDRVDYILVDDFDKETALKFMDFLAEEILNKKLSDDEKELIYSYVGGKPILIIKVIKKLKIKGLKETLDEMLRDEMQKLKYFLEDIKEKDEESYNKIADALEIFKDSYEIEDIKIPKNIREFLVKKNILFLNPQKGTLKPQSYLVWNAIKRLL.

41–48 provides a ligand contact to ATP; that stretch reads GPLNSGKT.

The protein belongs to the archaeal ATPase family.

This is an uncharacterized protein from Methanocaldococcus jannaschii (strain ATCC 43067 / DSM 2661 / JAL-1 / JCM 10045 / NBRC 100440) (Methanococcus jannaschii).